Here is a 274-residue protein sequence, read N- to C-terminus: Large ribosomal subunit protein uL2cz/uL2cy (274 aa).

Disordered stretches follow at residues 1–21 (MAIH…VDSQ) and 225–274 (PVDH…RRSK).

This sequence belongs to the universal ribosomal protein uL2 family. In terms of assembly, part of the 50S ribosomal subunit.

Its subcellular location is the plastid. The protein localises to the chloroplast. The polypeptide is Large ribosomal subunit protein uL2cz/uL2cy (rpl2-A) (Arabidopsis thaliana (Mouse-ear cress)).